The following is a 446-amino-acid chain: Probable D-serine dehydratase (446 aa).

N6-(pyridoxal phosphate)lysine is present on lysine 116.

The protein belongs to the serine/threonine dehydratase family. DsdA subfamily. It depends on pyridoxal 5'-phosphate as a cofactor.

The catalysed reaction is D-serine = pyruvate + NH4(+). The chain is Probable D-serine dehydratase from Bacillus cereus (strain 03BB102).